Reading from the N-terminus, the 291-residue chain is N-acetylmannosamine kinase (291 aa).

Residues 5-12 (AIDIGGTK) and 132-139 (GVGGGVVS) contribute to the ATP site. Residues H156, C166, C168, and C173 each coordinate Zn(2+).

The protein belongs to the ROK (NagC/XylR) family. NanK subfamily. Homodimer.

It carries out the reaction an N-acyl-D-mannosamine + ATP = an N-acyl-D-mannosamine 6-phosphate + ADP + H(+). It participates in amino-sugar metabolism; N-acetylneuraminate degradation; D-fructose 6-phosphate from N-acetylneuraminate: step 2/5. Its function is as follows. Catalyzes the phosphorylation of N-acetylmannosamine (ManNAc) to ManNAc-6-P. This chain is N-acetylmannosamine kinase, found in Escherichia coli O7:K1 (strain IAI39 / ExPEC).